The primary structure comprises 429 residues: Chaperone SurA (429 aa).

The first 19 residues, 1 to 19 (MKKTLLALLIASVMQSALA), serve as a signal peptide directing secretion. PpiC domains are found at residues 172-273 (RTEY…KLVD) and 283-381 (VEQY…LVEG).

It is found in the periplasm. It carries out the reaction [protein]-peptidylproline (omega=180) = [protein]-peptidylproline (omega=0). Chaperone involved in the correct folding and assembly of outer membrane proteins. Recognizes specific patterns of aromatic residues and the orientation of their side chains, which are found more frequently in integral outer membrane proteins. May act in both early periplasmic and late outer membrane-associated steps of protein maturation. The protein is Chaperone SurA of Chromobacterium violaceum (strain ATCC 12472 / DSM 30191 / JCM 1249 / CCUG 213 / NBRC 12614 / NCIMB 9131 / NCTC 9757 / MK).